The primary structure comprises 524 residues: Acetyl-CoA hydrolase (524 aa).

Residue 275–279 (GIGNI) participates in CoA binding. Catalysis depends on Glu300, which acts as the 5-glutamyl coenzyme A thioester intermediate. CoA contacts are provided by Asn390 and Gly394.

It belongs to the acetyl-CoA hydrolase/transferase family.

The protein resides in the cytoplasm. It catalyses the reaction acetyl-CoA + H2O = acetate + CoA + H(+). Functionally, presumably involved in regulating the intracellular acetyl-CoA pool for fatty acid and cholesterol synthesis and fatty acid oxidation. The chain is Acetyl-CoA hydrolase (ACH1) from Candida albicans (strain SC5314 / ATCC MYA-2876) (Yeast).